A 201-amino-acid polypeptide reads, in one-letter code: Glutathione S-transferase GstA (201 aa).

A GST N-terminal domain is found at 1–81; sequence MKLFYKPGAC…YLADSVPDRQ (81 aa). Glutathione-binding positions include Cys10, Lys35, Val52, 65-66, Asn99, and 103-106; these read EG and TELH. Positions 87 to 201 constitute a GST C-terminal domain; that stretch reads NSISRYKTIE…QDALSAEGLK (115 aa).

The protein belongs to the GST superfamily. Beta family. As to quaternary structure, homodimer.

The protein resides in the cytoplasm. The enzyme catalyses RX + glutathione = an S-substituted glutathione + a halide anion + H(+). In terms of biological role, conjugation of reduced glutathione to a wide number of exogenous and endogenous hydrophobic electrophiles. The polypeptide is Glutathione S-transferase GstA (gstA) (Escherichia coli O157:H7).